The sequence spans 157 residues: Arginine repressor (157 aa).

This sequence belongs to the ArgR family.

It is found in the cytoplasm. It functions in the pathway amino-acid biosynthesis; L-arginine biosynthesis [regulation]. Regulates arginine biosynthesis genes. The sequence is that of Arginine repressor from Bacteroides fragilis (strain ATCC 25285 / DSM 2151 / CCUG 4856 / JCM 11019 / LMG 10263 / NCTC 9343 / Onslow / VPI 2553 / EN-2).